An 880-amino-acid polypeptide reads, in one-letter code: Probable receptor-like protein kinase At5g38990 (880 aa).

An N-terminal signal peptide occupies residues 1 to 21 (MICHVLVIFTILVSAVVDATA). The Extracellular segment spans residues 22–440 (SYEPTDVFLI…GKGKSSHVLP (419 aa)). N-linked (GlcNAc...) asparagine glycans are attached at residues Asn46, Asn136, Asn158, Asn210, Asn256, Asn263, Asn297, and Asn324. A helical transmembrane segment spans residues 441–461 (IIIAVVGSAVALAFFVLVVVL). Residues 462-880 (VVMKRKKKSN…FSEINEPKAR (419 aa)) lie on the Cytoplasmic side of the membrane. The tract at residues 471-505 (NESSVDTTNKPSTNSSWGPLLHGTGSTNTKSASSL) is disordered. Polar residues-rich tracts occupy residues 472–487 (ESSV…NSSW) and 494–505 (TGSTNTKSASSL). The region spanning 525–810 (FEEKLIIGVG…EFALQLHETA (286 aa)) is the Protein kinase domain. Residues 531-539 (IGVGGFGSV) and Lys554 each bind ATP. Asp653 (proton acceptor) is an active-site residue. The interval 820 to 846 (LDLMPSGEVGTTTDGEDDLFSRTTGHV) is disordered.

This sequence belongs to the protein kinase superfamily. Ser/Thr protein kinase family.

It is found in the membrane. The protein is Probable receptor-like protein kinase At5g38990 of Arabidopsis thaliana (Mouse-ear cress).